Here is a 681-residue protein sequence, read N- to C-terminus: DNA-directed RNA polymerase subunit beta' (681 aa).

Positions 69, 71, 87, and 90 each coordinate Zn(2+). Mg(2+) contacts are provided by Asp489, Asp491, and Asp493.

Belongs to the RNA polymerase beta' chain family. RpoC1 subfamily. In plastids the minimal PEP RNA polymerase catalytic core is composed of four subunits: alpha, beta, beta', and beta''. When a (nuclear-encoded) sigma factor is associated with the core the holoenzyme is formed, which can initiate transcription. Requires Mg(2+) as cofactor. Zn(2+) is required as a cofactor.

It is found in the plastid. The protein resides in the chloroplast. The catalysed reaction is RNA(n) + a ribonucleoside 5'-triphosphate = RNA(n+1) + diphosphate. Its function is as follows. DNA-dependent RNA polymerase catalyzes the transcription of DNA into RNA using the four ribonucleoside triphosphates as substrates. The protein is DNA-directed RNA polymerase subunit beta' of Nicotiana tomentosiformis (Tobacco).